A 316-amino-acid polypeptide reads, in one-letter code: MDVLLANPRGFCAGVDRAIEIVKRAIETLGAPIYVRHEVVHNRFVVDDLKQRGAIFVEELDEVPDDATVIFSAHGVSQAVRQEAERRGLKVFDATCPLVTKVHFEVARHCRAGRDVVLIGHAGHPEVEGTMGQWSRERGAGTIYLVEDIEQVATLDVRQPDNLAYTTQTTLSVDDTMGIIEALRARYPAMQGPRHDDICYATQNRQDAVRDLARQCDLVLVVGSPNSSNSNRLSELARRDGVESYLIDNASEIDPAWIVGKQHIGLTAGASAPQVLVDGVLERLRELGAAGVSELEGEPESMVFALPKELRLRLVS.

Cysteine 12 serves as a coordination point for [4Fe-4S] cluster. Residues histidine 41 and histidine 74 each coordinate (2E)-4-hydroxy-3-methylbut-2-enyl diphosphate. Dimethylallyl diphosphate-binding residues include histidine 41 and histidine 74. 2 residues coordinate isopentenyl diphosphate: histidine 41 and histidine 74. Cysteine 96 is a binding site for [4Fe-4S] cluster. Histidine 124 serves as a coordination point for (2E)-4-hydroxy-3-methylbut-2-enyl diphosphate. Histidine 124 contributes to the dimethylallyl diphosphate binding site. Histidine 124 lines the isopentenyl diphosphate pocket. The Proton donor role is filled by glutamate 126. Residue threonine 169 participates in (2E)-4-hydroxy-3-methylbut-2-enyl diphosphate binding. Position 199 (cysteine 199) interacts with [4Fe-4S] cluster. Residues serine 227, serine 228, asparagine 229, and serine 271 each contribute to the (2E)-4-hydroxy-3-methylbut-2-enyl diphosphate site. Dimethylallyl diphosphate contacts are provided by serine 227, serine 228, asparagine 229, and serine 271. Isopentenyl diphosphate-binding residues include serine 227, serine 228, asparagine 229, and serine 271.

This sequence belongs to the IspH family. [4Fe-4S] cluster serves as cofactor.

The enzyme catalyses isopentenyl diphosphate + 2 oxidized [2Fe-2S]-[ferredoxin] + H2O = (2E)-4-hydroxy-3-methylbut-2-enyl diphosphate + 2 reduced [2Fe-2S]-[ferredoxin] + 2 H(+). It carries out the reaction dimethylallyl diphosphate + 2 oxidized [2Fe-2S]-[ferredoxin] + H2O = (2E)-4-hydroxy-3-methylbut-2-enyl diphosphate + 2 reduced [2Fe-2S]-[ferredoxin] + 2 H(+). It participates in isoprenoid biosynthesis; dimethylallyl diphosphate biosynthesis; dimethylallyl diphosphate from (2E)-4-hydroxy-3-methylbutenyl diphosphate: step 1/1. It functions in the pathway isoprenoid biosynthesis; isopentenyl diphosphate biosynthesis via DXP pathway; isopentenyl diphosphate from 1-deoxy-D-xylulose 5-phosphate: step 6/6. Catalyzes the conversion of 1-hydroxy-2-methyl-2-(E)-butenyl 4-diphosphate (HMBPP) into a mixture of isopentenyl diphosphate (IPP) and dimethylallyl diphosphate (DMAPP). Acts in the terminal step of the DOXP/MEP pathway for isoprenoid precursor biosynthesis. This chain is 4-hydroxy-3-methylbut-2-enyl diphosphate reductase, found in Xanthomonas axonopodis pv. citri (strain 306).